A 434-amino-acid chain; its full sequence is Beta-enolase (434 aa).

The residue at position 2 (Ser2) is an N-acetylserine. Substrate contacts are provided by His158 and Glu167. The active-site Proton donor is the Glu210. Positions 245, 293, and 318 each coordinate Mg(2+). Residues Glu293 and Asp318 each coordinate substrate. Lys343 acts as the Proton acceptor in catalysis. Substrate contacts are provided by residues 370–373 (SHRS) and Lys394.

This sequence belongs to the enolase family. Homodimer. Interacts with PNKD. Requires Mg(2+) as cofactor.

The protein localises to the cytoplasm. The enzyme catalyses (2R)-2-phosphoglycerate = phosphoenolpyruvate + H2O. The protein operates within carbohydrate degradation; glycolysis; pyruvate from D-glyceraldehyde 3-phosphate: step 4/5. Glycolytic enzyme that catalyzes the conversion of 2-phosphoglycerate to phosphoenolpyruvate. The polypeptide is Beta-enolase (ENO3) (Gallus gallus (Chicken)).